The following is a 1374-amino-acid chain: DNA-directed RNA polymerase subunit beta' (1374 aa).

The segment at 1–47 is disordered; it reads MTSTSPKSRKPSTKTTKSKSKSKSKSKAAKAAAAGASPALARTPPQF. The span at 7–28 shows a compositional bias: basic residues; the sequence is KSRKPSTKTTKSKSKSKSKSKA. Low complexity predominate over residues 29-39; the sequence is AKAAAAGASPA. Zn(2+) contacts are provided by cysteine 258, cysteine 325, cysteine 332, and cysteine 335. Residues 1344–1374 form a disordered region; the sequence is RPTGENELEEEQLPDPSALEGLQQEGLLTEE. Low complexity predominate over residues 1362-1374; it reads LEGLQQEGLLTEE.

The protein belongs to the RNA polymerase beta' chain family. RpoC2 subfamily. In terms of assembly, in cyanobacteria the RNAP catalytic core is composed of 2 alpha, 1 beta, 1 beta', 1 gamma and 1 omega subunit. When a sigma factor is associated with the core the holoenzyme is formed, which can initiate transcription. It depends on Zn(2+) as a cofactor.

The enzyme catalyses RNA(n) + a ribonucleoside 5'-triphosphate = RNA(n+1) + diphosphate. Functionally, DNA-dependent RNA polymerase catalyzes the transcription of DNA into RNA using the four ribonucleoside triphosphates as substrates. The protein is DNA-directed RNA polymerase subunit beta' of Prochlorococcus marinus (strain MIT 9313).